The following is a 257-amino-acid chain: UPF0246 protein ACICU_02469 (257 aa).

This sequence belongs to the UPF0246 family.

This is UPF0246 protein ACICU_02469 from Acinetobacter baumannii (strain ACICU).